We begin with the raw amino-acid sequence, 7126 residues long: Replicase polyprotein 1ab (7126 aa).

In terms of domain architecture, CoV Nsp1 globular spans arginine 25–glycine 151. The BetaCoV Nsp1 C-terminal domain maps to threonine 167 to glycine 195. The CoV Nsp2 N-terminal domain occupies cysteine 197–leucine 472. Zn(2+)-binding residues include cysteine 339, cysteine 342, cysteine 358, and cysteine 360. The C4 stretch occupies residues cysteine 339–cysteine 360. Residues glutamine 478 to leucine 712 form the CoV Nsp2 middle domain. The CoV Nsp2 C-terminal domain maps to histidine 714 to glycine 847. Residues lysine 851–aspartate 960 form the Ubiquitin-like 1 domain. Positions alanine 1039–aspartate 1061 are disordered. A compositionally biased stretch (low complexity) spans glutamate 1041–glutamate 1059. 2 Macro domains span residues aspartate 1159 to glycine 1328 and leucine 1329 to threonine 1453. The DPUP domain occupies threonine 1453–serine 1526. The 56-residue stretch at glutamine 1531–valine 1586 folds into the Ubiquitin-like 2 domain. The 272-residue stretch at glutamate 1600–asparagine 1871 folds into the Peptidase C16 domain. The For PL-PRO activity role is filled by cysteine 1641. Zn(2+) contacts are provided by cysteine 1721, cysteine 1724, cysteine 1756, and cysteine 1758. Residues cysteine 1721 to cysteine 1758 form a C4-type zinc finger. Active-site for PL-PRO activity residues include histidine 1807 and aspartate 1822. The region spanning threonine 1885–leucine 2002 is the Nucleic acid-binding domain. The G2M domain occupies proline 2019–alanine 2140. The next 3 helical transmembrane spans lie at valine 2119–threonine 2139, phenylalanine 2152–leucine 2172, and leucine 2229–phenylalanine 2249. The segment at valine 2119 to valine 2402 is HD1. Residues leucine 2266 to serine 2332 enclose the 3Ecto domain. Disulfide bonds link cysteine 2282–cysteine 2310 and cysteine 2300–cysteine 2307. Transmembrane regions (helical) follow at residues tyrosine 2333–tyrosine 2353, phenylalanine 2357–valine 2377, and tyrosine 2382–valine 2402. Residues lysine 2416–aspartate 2506 are Y1. The region spanning lysine 2416–isoleucine 2789 is the CoV Nsp3 Y domain. Zn(2+) is bound by residues histidine 2420, cysteine 2425, cysteine 2430, cysteine 2433, cysteine 2466, histidine 2469, cysteine 2473, and cysteine 2476. Positions histidine 2420 to cysteine 2433 are ZF1. A ZF2 region spans residues cysteine 2466 to cysteine 2476. The tract at residues glutamine 2507–valine 2605 is Y2. Residues glutamine 2507–isoleucine 2789 are coV-Y. The interval glycine 2606–aspartate 2688 is Y3. The interval isoleucine 2689–isoleucine 2789 is Y4. 4 helical membrane-spanning segments follow: residues glycine 2807 to proline 2827, serine 3079 to isoleucine 3099, cysteine 3112 to alanine 3132, and alanine 3156 to leucine 3176. An HD2 region spans residues glycine 2807 to leucine 3176. Residues valine 3202–glutamine 3298 enclose the Nsp4C domain. Residues serine 3299–glutamine 3604 form the Peptidase C30 domain. Residues histidine 3339 and cysteine 3446 each act as for 3CL-PRO activity in the active site. The next 7 helical transmembrane spans lie at isoleucine 3610 to methionine 3630, threonine 3644 to valine 3664, threonine 3669 to tyrosine 3689, arginine 3714 to valine 3734, methionine 3742 to glycine 3762, leucine 3791 to proline 3811, and leucine 3815 to serine 3835. Residues isoleucine 3610–serine 3835 are HD3. The region spanning serine 3897–glutamine 3979 is the RdRp Nsp7 cofactor domain. Residues alanine 3980 to glutamine 4178 enclose the RdRp Nsp8 cofactor domain. Positions asparagine 4179–glutamine 4288 constitute a Nsp9 ssRNA-binding domain. The region spanning alanine 4289–glutamine 4427 is the ExoN/MTase coactivator domain. Cysteine 4362, cysteine 4365, histidine 4371, cysteine 4378, cysteine 4404, cysteine 4407, cysteine 4415, and cysteine 4417 together coordinate Zn(2+). Zinc fingers lie at residues cysteine 4362–cysteine 4378 and cysteine 4404–cysteine 4417. Residues phenylalanine 4433 to phenylalanine 4690 form the NiRAN domain. Residues asparagine 4638 and aspartate 4647 each coordinate Mn(2+). Residues isoleucine 4695–histidine 4793 form the Nsp12 Interface domain. Histidine 4724, cysteine 4730, cysteine 4735, cysteine 4739, and cysteine 4916 together coordinate Zn(2+). Residues arginine 4794 to glutamine 5361 form the Nsp12 RNA-dependent RNA polymerase domain. A rdRp Fingers N-ter region spans residues alanine 4796–alanine 5010. The interval threonine 5011–proline 5049 is rdRp Palm N-ter. The 163-residue stretch at proline 5041–glycine 5203 folds into the RdRp catalytic domain. The interval lysine 5050 to glycine 5108 is rdRp Fingers C-ter. Residues histidine 5071, cysteine 5074, and cysteine 5075 each contribute to the Zn(2+) site. The tract at residues threonine 5109–glutamine 5244 is rdRp Palm C-ter. Catalysis depends on residues serine 5188, aspartate 5189, and aspartate 5190. The segment at histidine 5245–glutamine 5361 is rdRp Thumb. One can recognise a CV ZBD domain in the interval alanine 5362 to aspartate 5474. Residues cysteine 5366, cysteine 5369, cysteine 5377, cysteine 5380, cysteine 5387, cysteine 5390, histidine 5394, histidine 5400, cysteine 5411, cysteine 5416, cysteine 5433, and histidine 5436 each contribute to the Zn(2+) site. A (+)RNA virus helicase ATP-binding domain is found at threonine 5618–leucine 5799. An ATP-binding site is contributed by glycine 5643 to serine 5650. Residues serine 5800–aspartate 5974 form the (+)RNA virus helicase C-terminal domain. The ExoN domain occupies leucine 6031 to isoleucine 6246. Active-site residues include aspartate 6049, glutamate 6051, and glutamate 6150. Residues cysteine 6166, cysteine 6169, cysteine 6185, histidine 6188, histidine 6216, cysteine 6220, and histidine 6223 each coordinate Zn(2+). Catalysis depends on residues histidine 6227 and aspartate 6232. Cysteine 6238 contributes to the Zn(2+) binding site. The 228-residue stretch at tyrosine 6255–glutamine 6482 folds into the N7-MTase domain. Aspartate 6290–glycine 6296 provides a ligand contact to S-adenosyl-L-methionine. The gpppA-binding stretch occupies residues cysteine 6368–threonine 6382. Zn(2+) is bound by residues cysteine 6406, cysteine 6428, cysteine 6439, and histidine 6442. The Nsp15 N-terminal oligomerization domain maps to glycine 6483–arginine 6543. One can recognise an AV-Nsp11N/CoV-Nsp15M domain in the interval alanine 6544–valine 6665. A NendoU domain is found at threonine 6682–proline 6821. Active-site residues include histidine 6712, histidine 6727, lysine 6767, lysine 6870, aspartate 6954, lysine 6994, and glutamate 7027. The Nidovirus-type SAM-dependent 2'-O-MTase domain maps to threonine 6826 to valine 7120.

It belongs to the coronaviruses polyprotein 1ab family. Interacts with host PHB and PHB2. As to quaternary structure, interacts with papain-like protease nsp3 and non-structural protein 6. In terms of assembly, monomer. Homodimer. Only the homodimer shows catalytic activity. Interacts with nsp8 and nsp12 to form the replication-transcription complex (RTC): nsp12, nsp7, two subunits of nsp8, and up to two subunits of nsp13. As to quaternary structure, interacts with nsp7, nsp13 and nsp12 to form the replication-transcription complex (RTC): nsp12, nsp7, two subunits of nsp8, and up to two subunits of nsp13. In terms of assembly, interacts with nsp12. Interacts with proofreading exoribonuclease nsp14 and 2'-O-methyltransferase nsp16; these interactions enhance nsp14 and nsp16 enzymatic activities. As to quaternary structure, interacts with nsp7 and nsp8 to form the replication-transcription complex (RTC): nsp12, nsp7, two subunits of nsp8, and up to two subunits of nsp13. Interacts with nsp9. In terms of assembly, interacts with nsp8 to form the replication-transcription complex (RTC): nsp12, nsp7, two subunits of nsp8, and up to two subunits of nsp13. The cofactor is Mn(2+). Requires Mg(2+) as cofactor. Specific enzymatic cleavages in vivo by its own proteases yield mature proteins. 3CL-PRO and PL-PRO proteinases are autocatalytically processed.

It localises to the host membrane. Its subcellular location is the host cytoplasm. It is found in the host perinuclear region. The protein resides in the host endoplasmic reticulum-Golgi intermediate compartment. The enzyme catalyses ATP + H2O = ADP + phosphate + H(+). It carries out the reaction RNA(n) + a ribonucleoside 5'-triphosphate = RNA(n+1) + diphosphate. It catalyses the reaction Thiol-dependent hydrolysis of ester, thioester, amide, peptide and isopeptide bonds formed by the C-terminal Gly of ubiquitin (a 76-residue protein attached to proteins as an intracellular targeting signal).. The catalysed reaction is a 5'-end (N(7)-methyl 5'-triphosphoguanosine)-ribonucleoside in mRNA + S-adenosyl-L-methionine = a 5'-end (N(7)-methyl 5'-triphosphoguanosine)-(2'-O-methyl-ribonucleoside) in mRNA + S-adenosyl-L-homocysteine + H(+). The enzyme catalyses uridylyl-uridylyl-ribonucleotide-RNA = a 3'-end uridylyl-2',3'-cyclophospho-uridine-RNA + a 5'-end dephospho-ribonucleoside-RNA. It carries out the reaction a 5'-end diphospho-ribonucleoside in mRNA + GTP + H(+) = a 5'-end (5'-triphosphoguanosine)-ribonucleoside in mRNA + diphosphate. It catalyses the reaction a 5'-end (5'-triphosphoguanosine)-ribonucleoside in mRNA + S-adenosyl-L-methionine = a 5'-end (N(7)-methyl 5'-triphosphoguanosine)-ribonucleoside in mRNA + S-adenosyl-L-homocysteine. In terms of biological role, the replicase polyprotein of coronaviruses is a multifunctional protein: it contains the activities necessary for the transcription of negative stranded RNA, leader RNA, subgenomic mRNAs and progeny virion RNA as well as proteinases responsible for the cleavage of the polyprotein into functional products. Functionally, inhibits host translation by interacting with the 40S ribosomal subunit. The nsp1-40S ribosome complex further induces an endonucleolytic cleavage near the 5'UTR of host mRNAs, targeting them for degradation. Viral mRNAs are not susceptible to nsp1-mediated endonucleolytic RNA cleavage thanks to the presence of a 5'-end leader sequence and are therefore protected from degradation. By suppressing host gene expression, nsp1 facilitates efficient viral gene expression in infected cells and evasion from host immune response. May play a role in the modulation of host cell survival signaling pathway by interacting with host PHB and PHB2. Indeed, these two proteins play a role in maintaining the functional integrity of the mitochondria and protecting cells from various stresses. Its function is as follows. Responsible for the cleavages located at the N-terminus of the replicase polyprotein. In addition, PL-PRO possesses a deubiquitinating/deISGylating activity and processes both 'Lys-48'- and 'Lys-63'-linked polyubiquitin chains from cellular substrates. Participates together with nsp4 in the assembly of virally-induced cytoplasmic double-membrane vesicles necessary for viral replication. Antagonizes innate immune induction of type I interferon by blocking the phosphorylation, dimerization and subsequent nuclear translocation of host IRF3. Also prevents host NF-kappa-B signaling. In terms of biological role, participates in the assembly of virally-induced cytoplasmic double-membrane vesicles necessary for viral replication. Functionally, cleaves the C-terminus of replicase polyprotein at 11 sites. Recognizes substrates containing the core sequence [ILMVF]-Q-|-[SGACN]. Also able to bind an ADP-ribose-1''-phosphate (ADRP). Plays a role in the initial induction of autophagosomes from host endoplasmic reticulum. Later, limits the expansion of these phagosomes that are no longer able to deliver viral components to lysosomes. Its function is as follows. Forms a hexadecamer with nsp8 (8 subunits of each) that may participate in viral replication by acting as a primase. Alternatively, may synthesize substantially longer products than oligonucleotide primers. In terms of biological role, forms a hexadecamer with nsp7 (8 subunits of each) that may participate in viral replication by acting as a primase. Alternatively, may synthesize substantially longer products than oligonucleotide primers. Functionally, forms a primer, NSP9-pU, which is utilized by the polymerase for the initiation of RNA chains. Interacts with ribosome signal recognition particle RNA (SRP). Together with NSP8, suppress protein integration into the cell membrane, thereby disrupting host immune defenses. Plays a pivotal role in viral transcription by stimulating both nsp14 3'-5' exoribonuclease and nsp16 2'-O-methyltransferase activities. Therefore plays an essential role in viral mRNAs cap methylation. Its function is as follows. RNA-directed RNA polymerase that catalyzes the transcription of viral genomic and subgenomic RNAs. Acts in complex with nsp7 and nsp8 to transcribe both the minus and positive strands of genomic RNA. The kinase-like NiRAN domain of NSP12 attaches one or more nucleotides to the amino terminus of NSP9, forming a covalent RNA-protein intermediate that serves as transcription/replication primer. Subgenomic RNAs (sgRNAs) are formed by discontinuous transcription: The polymerase has the ability to pause at transcription-regulating sequences (TRS) and jump to the leader TRS, resulting in a major deletion. This creates a series of subgenomic RNAs that are replicated, transcribed and translated. In addition, Nsp12 is a subunit of the viral RNA capping enzyme that catalyzes the RNA guanylyltransferase reaction for genomic and sub-genomic RNAs. Subsequently, the NiRAN domain transfers RNA to GDP, and forms the core cap structure GpppA-RNA. In terms of biological role, multi-functional protein with a zinc-binding domain in N-terminus displaying RNA and DNA duplex-unwinding activities with 5' to 3' polarity. Activity of helicase is dependent on magnesium. Functionally, plays a role in viral RNA synthesis through two distinct activities. The N7-guanine methyltransferase activity plays a role in the formation of the cap structure GpppA-RNA. The proofreading exoribonuclease reduces the sensitivity of the virus to RNA mutagens during replication. This activity acts on both ssRNA and dsRNA in a 3'-5' direction. Plays a role in viral transcription/replication and prevents the simultaneous activation of host cell dsRNA sensors, such as MDA5/IFIH1, OAS, and PKR. Acts by degrading the 5'-polyuridines generated during replication of the poly(A) region of viral genomic and subgenomic RNAs. Catalyzes a two-step reaction in which a 2'3'-cyclic phosphate (2'3'-cP) is first generated by 2'-O transesterification, which is then hydrolyzed to a 3'-phosphate (3'-P). If not degraded, poly(U) RNA would hybridize with poly(A) RNA tails and activate host dsRNA sensors. Its function is as follows. Methyltransferase that mediates mRNA cap 2'-O-ribose methylation to the 5'-cap structure of viral mRNAs. N7-methyl guanosine cap is a prerequisite for binding of nsp16. Therefore plays an essential role in viral mRNAs cap methylation which is essential to evade immune system. This Bat coronavirus 133/2005 (BtCoV) protein is Replicase polyprotein 1ab (rep).